The primary structure comprises 254 residues: Photosystem II 22 kDa protein 2, chloroplastic (254 aa).

The N-terminal 38 residues, 1–38 (MALQQSMAMPMMVVSGLGTAPRSSPMVQLQRMKKHLVV), are a transit peptide targeting the chloroplast. Tandem repeats lie at residues 42-148 (FKSR…FVDD) and 149-253 (ATGL…DNDD). The next 4 helical transmembrane spans lie at 86–106 (VAML…KGIL), 120–140 (AEPL…GALG), 184–204 (LFVG…EIIT), and 219–239 (PINE…FAAI).

It belongs to the ELIP/psbS family.

The protein resides in the plastid. Its subcellular location is the chloroplast thylakoid membrane. Its function is as follows. Involved in high light-mediated energy-dependent nonphotochemical quenching (NPQ, qE) and thermal dissipation (TD) thus regulating energy conversion in photosystem II and protecting from photoinhibition. Also seems to regulate quantum yield of electron transport in fluctuating light conditions. This Oryza sativa subsp. indica (Rice) protein is Photosystem II 22 kDa protein 2, chloroplastic.